The primary structure comprises 401 residues: Beta-ketoadipyl-CoA thiolase (401 aa).

Catalysis depends on cysteine 90, which acts as the Acyl-thioester intermediate. Active-site proton acceptor residues include histidine 357 and cysteine 387.

This sequence belongs to the thiolase-like superfamily. Thiolase family.

It catalyses the reaction succinyl-CoA + acetyl-CoA = 3-oxoadipyl-CoA + CoA. The protein operates within aromatic compound metabolism; phenylacetate degradation. Catalyzes thiolytic cleavage of beta-ketoadipyl-CoA to succinyl-CoA and acetyl-CoA. The sequence is that of Beta-ketoadipyl-CoA thiolase (paaJ) from Escherichia coli.